The primary structure comprises 1134 residues: Error-prone DNA polymerase (1134 aa).

The interval 1–33 (MSYHNPPIPWRELEGRISGRPAPHGHQESHADQ) is disordered.

This sequence belongs to the DNA polymerase type-C family. DnaE2 subfamily.

It localises to the cytoplasm. It catalyses the reaction DNA(n) + a 2'-deoxyribonucleoside 5'-triphosphate = DNA(n+1) + diphosphate. Its function is as follows. DNA polymerase involved in damage-induced mutagenesis and translesion synthesis (TLS). It is not the major replicative DNA polymerase. The protein is Error-prone DNA polymerase of Cutibacterium acnes (strain DSM 16379 / KPA171202) (Propionibacterium acnes).